Consider the following 266-residue polypeptide: Glucosamine-6-phosphate deaminase (266 aa).

The Proton acceptor; for enolization step role is filled by D72. Residue D141 is the For ring-opening step of the active site. H143 functions as the Proton acceptor; for ring-opening step in the catalytic mechanism. Residue E148 is the For ring-opening step of the active site.

It belongs to the glucosamine/galactosamine-6-phosphate isomerase family. NagB subfamily. Homohexamer; trimer of disulfide-linked dimers.

The catalysed reaction is alpha-D-glucosamine 6-phosphate + H2O = beta-D-fructose 6-phosphate + NH4(+). It participates in amino-sugar metabolism; N-acetylneuraminate degradation; D-fructose 6-phosphate from N-acetylneuraminate: step 5/5. Its activity is regulated as follows. Allosterically activated by N-acetylglucosamine 6-phosphate (GlcNAc6P). Catalyzes the reversible isomerization-deamination of glucosamine 6-phosphate (GlcN6P) to form fructose 6-phosphate (Fru6P) and ammonium ion. The chain is Glucosamine-6-phosphate deaminase from Shigella flexneri serotype 5b (strain 8401).